The sequence spans 455 residues: Ribulose bisphosphate carboxylase large chain (455 aa).

Residue Lys5 is modified to N6,N6,N6-trimethyllysine. Residues Asn114 and Thr164 each contribute to the substrate site. Lys166 serves as the catalytic Proton acceptor. Residue Lys168 coordinates substrate. Positions 192, 194, and 195 each coordinate Mg(2+). Residue Lys192 is modified to N6-carboxylysine. His285 functions as the Proton acceptor in the catalytic mechanism. Residues Arg286, His318, and Ser370 each coordinate substrate.

This sequence belongs to the RuBisCO large chain family. Type I subfamily. In terms of assembly, heterohexadecamer of 8 large chains and 8 small chains; disulfide-linked. The disulfide link is formed within the large subunit homodimers. Requires Mg(2+) as cofactor. Post-translationally, the disulfide bond which can form in the large chain dimeric partners within the hexadecamer appears to be associated with oxidative stress and protein turnover.

The protein localises to the plastid. The protein resides in the chloroplast. The catalysed reaction is 2 (2R)-3-phosphoglycerate + 2 H(+) = D-ribulose 1,5-bisphosphate + CO2 + H2O. It carries out the reaction D-ribulose 1,5-bisphosphate + O2 = 2-phosphoglycolate + (2R)-3-phosphoglycerate + 2 H(+). In terms of biological role, ruBisCO catalyzes two reactions: the carboxylation of D-ribulose 1,5-bisphosphate, the primary event in carbon dioxide fixation, as well as the oxidative fragmentation of the pentose substrate in the photorespiration process. Both reactions occur simultaneously and in competition at the same active site. The sequence is that of Ribulose bisphosphate carboxylase large chain from Lupinus cosentinii (West Australian blue lupine).